The sequence spans 204 residues: Lymphotoxin-alpha (204 aa).

The N-terminal stretch at 1-33 (MTPPGRLYLLRVRSAPVLLLLGLLLGLPPGAQG) is a signal peptide. The THD domain occupies 62 to 204 (PAAHLIGDPS…SSVFFGAFAL (143 aa)). Asn95 is a glycosylation site (N-linked (GlcNAc...) asparagine). An intrachain disulfide couples Cys119 to Cys155.

This sequence belongs to the tumor necrosis factor family. Homotrimer, and heterotrimer of either two LTB and one LTA subunits or (less prevalent) two LTA and one LTB subunits. Interacts with TNFRSF14.

It is found in the secreted. It localises to the membrane. Its function is as follows. Cytokine that in its homotrimeric form binds to TNFRSF1A/TNFR1, TNFRSF1B/TNFBR and TNFRSF14/HVEM. In its heterotrimeric form with LTB binds to TNFRSF3/LTBR. Lymphotoxin is produced by lymphocytes and is cytotoxic for a wide range of tumor cells in vitro and in vivo. This chain is Lymphotoxin-alpha (LTA), found in Canis lupus familiaris (Dog).